The primary structure comprises 43 residues: Protein PsbN (43 aa).

Residues 4-24 (GILIVIFISCLLVSFTGYAVY) form a helical membrane-spanning segment.

The protein belongs to the PsbN family.

Its subcellular location is the plastid. It is found in the chloroplast thylakoid membrane. May play a role in photosystem I and II biogenesis. The polypeptide is Protein PsbN (Coleochaete orbicularis (Charophycean green alga)).